We begin with the raw amino-acid sequence, 180 residues long: UPF0227 protein Shew_1627 (180 aa).

Belongs to the UPF0227 family.

This chain is UPF0227 protein Shew_1627, found in Shewanella loihica (strain ATCC BAA-1088 / PV-4).